Consider the following 352-residue polypeptide: PDZ and LIM domain protein 2 (352 aa).

Positions 1–84 (MALTVDVAGP…PLRLQLDRSQ (84 aa)) constitute a PDZ domain. Disordered stretches follow at residues 67–97 (SKIR…DSSL) and 111–149 (YTES…TGEA). The span at 81–95 (DRSQATSPGQTNGDS) shows a compositional bias: polar residues. A compositionally biased stretch (low complexity) spans 111–135 (YTESQSSLRSSYSSPTSLSPRAGSP). Serine 124 carries the post-translational modification Phosphoserine. Threonine 126 carries the post-translational modification Phosphothreonine. Serine 127, serine 129, serine 134, serine 137, serine 143, serine 161, serine 197, serine 203, serine 213, and serine 266 each carry phosphoserine. Residues 170-213 (LSYSGRPGSRQAGLGRAGDSAVLVLPPSPGPRSSRPSMDSEGGS) are disordered. An LIM zinc-binding domain is found at 284–344 (HTCEKCSTSI…EKHARQRYSA (61 aa)).

As to quaternary structure, interacts with alpha-actinins ACTN1 and ACTN4, FLNA and MYH9. Interacts (via LIM zinc-binding domain) with MKRN2.

It localises to the cytoplasm. Its subcellular location is the nucleus. The protein localises to the cytoskeleton. Functionally, probable adapter protein located at the actin cytoskeleton that promotes cell attachment. Necessary for the migratory capacity of epithelial cells. Overexpression enhances cell adhesion to collagen and fibronectin and suppresses anchorage independent growth. May contribute to tumor cell migratory capacity. This Homo sapiens (Human) protein is PDZ and LIM domain protein 2 (PDLIM2).